The following is a 293-amino-acid chain: HTH-type transcriptional regulator HdfR (293 aa).

Residues Met-1–Thr-58 form the HTH lysR-type domain. A DNA-binding region (H-T-H motif) is located at residues Phe-18–Arg-37.

Belongs to the LysR transcriptional regulatory family.

Negatively regulates the transcription of the flagellar master operon flhDC by binding to the upstream region of the operon. This chain is HTH-type transcriptional regulator HdfR, found in Yersinia enterocolitica serotype O:8 / biotype 1B (strain NCTC 13174 / 8081).